Here is a 348-residue protein sequence, read N- to C-terminus: MVSNIPFSIPEHSLDRDCTTLSRHVLQQLQSFSSDAQDLSAIMSRIALAGKLIARRLSKAGLMADVLGFTGETNVQGESVKKMDVFANEVFISVFKQSGLVCRLASEEMDKPYYIPENCPIGRYTLLYDPIDGSSNVDINLNVGSIFAIRQQEDNDLDGEARDLLQNGRKQIAAGYILYGPSTILVYSIGRGVHAFVLDPSLGEFILAQENIIIPDHGPIYSTNEGNFWQWDEAIRDYTRYVHRHDGYTARYSGALVGDIHRILMQGGVFLYPGTVKNPQGKLRLIYETAPLAFLIEQAGGKASDGVTNLLDIVPDKLHYRTPLVIGSVEDVKLVESFIADRRHRDRV.

4 residues coordinate Mg(2+): Glu-107, Asp-129, Ile-131, and Asp-132. Residues 132-135 (DGSS), Asn-224, Tyr-252, and Lys-282 each bind substrate. Position 288 (Glu-288) interacts with Mg(2+).

The protein belongs to the FBPase class 1 family. Homotetramer. Requires Mg(2+) as cofactor.

Its subcellular location is the cytoplasm. It carries out the reaction beta-D-fructose 1,6-bisphosphate + H2O = beta-D-fructose 6-phosphate + phosphate. Its pathway is carbohydrate biosynthesis; Calvin cycle. This Microcystis aeruginosa (strain NIES-843 / IAM M-2473) protein is Fructose-1,6-bisphosphatase class 1.